The following is a 384-amino-acid chain: N-acetylneuraminate epimerase (384 aa).

The signal sequence occupies residues methionine 1–alanine 29. 7 Kelch repeats span residues valine 51–asparagine 95, lysine 97–asparagine 149, threonine 151–tyrosine 184, asparagine 185–asparagine 230, leucine 233–alanine 282, glutamine 304–aspartate 353, and valine 355–lysine 384. Glutamate 239 (proton acceptor) is an active-site residue.

The protein belongs to the NanM family. As to quaternary structure, homodimer.

The protein resides in the periplasm. The enzyme catalyses N-acetyl-alpha-neuraminate = N-acetyl-beta-neuraminate. Converts alpha-N-acetylneuranimic acid (Neu5Ac) to the beta-anomer, accelerating the equilibrium between the alpha- and beta-anomers. Probably facilitates sialidase-negative bacteria to compete successfully for limited amounts of extracellular Neu5Ac, which is likely taken up in the beta-anomer. In addition, the rapid removal of sialic acid from solution might be advantageous to the bacterium to damp down host responses. In Salmonella typhi, this protein is N-acetylneuraminate epimerase.